We begin with the raw amino-acid sequence, 237 residues long: Uridylate kinase (237 aa).

Position 13 to 16 (13 to 16) interacts with ATP; the sequence is KLSG. Glycine 53 serves as a coordination point for UMP. 2 residues coordinate ATP: glycine 54 and arginine 58. UMP is bound by residues aspartate 73 and 134–141; that span reads AGLPYFST. Asparagine 162, tyrosine 168, and aspartate 171 together coordinate ATP.

It belongs to the UMP kinase family. Homohexamer.

Its subcellular location is the cytoplasm. It carries out the reaction UMP + ATP = UDP + ADP. It participates in pyrimidine metabolism; CTP biosynthesis via de novo pathway; UDP from UMP (UMPK route): step 1/1. With respect to regulation, inhibited by UTP. In terms of biological role, catalyzes the reversible phosphorylation of UMP to UDP. This chain is Uridylate kinase, found in Leifsonia xyli subsp. xyli (strain CTCB07).